Consider the following 1033-residue polypeptide: NACHT, LRR and PYD domains-containing protein 3 (1033 aa).

Residues Met1–Glu91 form the Pyrin domain. Phosphoserine is present on Ser3. Cysteines 6 and 104 form a disulfide. Tyr11 carries the phosphotyrosine modification. A lipid anchor (S-palmitoyl cysteine) is attached at Cys126. The required for binding to phosphatidylinositol 4-phosphate (PtdIns4P) stretch occupies residues Lys127–Lys130. A phosphotyrosine; by BTK mark is found at Tyr132, Tyr136, and Tyr145. The FISNA domain occupies Tyr136 to Glu206. Ser157 carries the post-translational modification Phosphoserine. Position 164 is a phosphotyrosine; by BTK (Tyr164). Thr165 serves as a coordination point for ATP. A Phosphoserine; by MAPK8 modification is found at Ser194. Ser197 bears the Phosphoserine mark. In terms of domain architecture, NACHT spans His216–Leu532. An ATP-binding site is contributed by Gly222–Ile230. A Phosphoserine modification is found at Ser261. Ser291 is subject to Phosphoserine; by PKD/PRKD1. A Glycyl lysine isopeptide (Lys-Gly) (interchain with G-Cter in ubiquitin) cross-link involves residue Lys320. Ser330 bears the Phosphoserine mark. A KFERQ-like motif 1 motif is present at residues Leu351–Gln355. A Glycyl lysine isopeptide (Lys-Gly) (interchain with G-Cter in ubiquitin) cross-link involves residue Lys426. His518 provides a ligand contact to ATP. Positions Gln601–Glu605 match the KFERQ-like motif 2 motif. Lys687 is covalently cross-linked (Glycyl lysine isopeptide (Lys-Gly) (interchain with G-Cter in ubiquitin)). Ser725 and Ser732 each carry phosphoserine. 5 LRR repeats span residues Ser739 to Cys759, Asn768 to Ser789, Lys796 to Cys816, Asn825 to Leu846, and Ser853 to Cys873. Residues Gln795–Glu799 carry the KFERQ-like motif 3 motif. Ser803 is subject to Phosphoserine; by CSNK1A1. Residues Cys834, Cys835, and Cys841 are each lipidated (S-palmitoyl cysteine). The residue at position 858 (Tyr858) is a Phosphotyrosine. Lys875 participates in a covalent cross-link: Glycyl lysine isopeptide (Lys-Gly) (interchain with G-Cter in ubiquitin). LRR repeat units lie at residues Asn882–Ser903, Asn910–Cys930, Lys939–Thr960, and Ser967–Glu988. Residue Cys955 is the site of S-palmitoyl cysteine attachment. Lys970 is covalently cross-linked (Glycyl lysine isopeptide (Lys-Gly) (interchain with G-Cter in ubiquitin)). The KFERQ-like motif 4 signature appears at Glu988–Gln992. Ser1032 is modified (phosphoserine).

It belongs to the NLRP family. In terms of assembly, sensor component of NLRP3 inflammasomes; inflammasomes are supramolecular complexes that assemble in the cytosol in response to pathogens and other damage-associated signals and play critical roles in innate immunity and inflammation. The core of NLRP3 inflammasomes consists of a signal sensor component (NLRP3), an adapter (PYCARD/ASC), which recruits an effector pro-inflammatory caspase (CASP1 and, possibly, CASP4 and CASP5). Homodecamer; inactive NLRP3 forms homodecameric double-ring cages that hide pyrin domains within NACHT-LRR rings to avoid premature activation. Interacts (via pyrin domain) with PYCARD/ASC (via pyrin domain); interaction is direct. Interacts (via LRR repeat domain) with NEK7 (via N-terminus); the interaction is required for the formation of the complex NLRP3:PYCARD, oligomerization of PYCARD/ASC and activation of CASP1. Interacts (via LRR repeat domain) with NR4A1/Nur77 (via N-terminus); the interaction is direct, requires activation of NR4A1 by its ligands NBRE-containing dsDNA and lipopolysaccharide, and stimulates the association of NLRP3 with NEK7 for non-canonical NLRP3 inflammasome activation. Interacts with CARD8; leading to inhibit formation of the NLRP3 inflammasome. Interacts with MEFV; this interaction targets NLRP3 to degradation by autophagy, hence preventing excessive IL1B- and IL18-mediated inflammation. Interacts with EIF2AK2/PKR; this interaction requires EIF2AK2 activity, is accompanied by EIF2AK2 autophosphorylation and promotes inflammasome assembly in response to specific stimuli. Interacts with GBP5 (via DAPIN domain); this interaction promotes inflammasome assembly in response to microbial and soluble, but not crystalline, agents. Interacts with PML (isoform PML-1) (via the leucine-rich repeat (LRR) domain); PML-mediated increase in NLRP3 inflammasome activation does not depend upon this interaction. Interacts (via NACHT domain) with DHX33 (via DEAH box); NLRP3 activation in presence of cytosolic dsRNA is mediated by DHX33. Interacts (via NACHT and LRR domains) with ARRB2; this interaction is direct and inducible by polyunsaturated fatty acids (PUFAs). Interacts (via NACHT domain) with DDX3X under both LPS-primed and inflammasome-activating conditions. Interacts with IRF4 (via the LRR domain); this interaction is direct and is required for optimal IRF4 binding to IL4 promoter and efficient IL4 transactivation during differentiation of Th2 helper T-cells. Interacts with MAVS; promoting localization to mitochondria and activation of the NLRP3 inflammasome. Interacts with MARK4; promoting localization of NLRP3 to the microtubule organizing center (MTOC). Interacts with TRIM50; this interaction also promotes NLRP3 oligomerization and subsequent inflammasome activation. Interacts with IRGM; preventing NLRP3 inflammasome assembly and promoting NLRP3 degradation. Interacts (via KFERQ-like motifs) with HSPA8/HSC70; promoting NLRP3 degradation by the chaperone-mediated autophagy pathway. Interacts (via NACHT and LLR domains) with ABHD8; this interaction is enhanced in the presence of NLRP3 inflammasome inducers, such as ATP, nigericin, silica, or alum. Interaction with ABHD8 leads the recruitment of ZDHHC12, hence facilitating NLRP3 palmitoylation and degradation by the chaperone-mediated autophagy pathway (CMA), therefore attenuating NLRP3 inflammasome activation. In terms of processing, phosphorylation at Ser-194 by MAPK8/JNK1 increases inflammasome activation by promoting deubiquitination by BRCC3 and NLRP3 homooligomerization. Phosphorylation at Ser-803 by CSNK1A1 prevents inflammasome activation by preventing NEK7 recruitment. Phosphorylation at Ser-3 in the pyrin domain inhibits homomultimerization of NLRP3 and activation of the NLRP3 inflammasome: dephosphorylation by protein phosphatase 2A (PP2A) promotes assembly of the NLRP3 inflammasome. Phosphorylation at Ser-291 by PKD/PRKD1 promotes NLRP3 inflammasome assembly. Phosphorylation by ERK1/MAPK3 promotes NLRP3 inflammasome assembly. Phosphorylation by BTK (at Tyr-132, Tyr-136, Tyr-145 and Tyr-164) in the region that mediates binding to phosphatidylinositol phosphate, promotes relocalization of NLRP3 and assembly of the NLRP3 inflammasome. Phosphorylation at Tyr-858 inhibits NLRP3 inflammasome assembly: dephosphorylation by PTPN22 promotes inflammasome activation Phosphorylated by LATS1 and LATS2 at Ser-261 following palmitoylation by ZDHHC1, promoting its relocalization to the microtubule organizing center (MTOC), where NLRP3 is activated by NEK7, leading to inflammasome assembly and activation. Post-translationally, ubiquitinated; undergoes both 'Lys-48'- and 'Lys-63'-linked polyubiquitination. Ubiquitination does not lead to degradation, but inhibits inflammasome activation. Deubiquitination is catalyzed by BRCC3 and associated with NLRP3 activation and inflammasome assembly. This process can be induced by the activation of Toll-like receptors (by LPS), through a non-transcriptional pathway dependent on the mitochondrial production of reactive oxygen species, and by ATP. Ubiquitinated by TRIM31 via 'Lys-48'-linked ubiquitination, leading to its degradation by the proteasome. Ubiquitinated at Lys-687 by the SCF(FBXL2) complex, leading to its degradation by the proteasome. Ubiquitinated by TRIM35 via 'lys-48' and 'Lys-63'-linked ubiquitination leading to inhibition of NLRP3 inflammasome activation. Undergoes 'Lys-27'-linked polyubiquitination by MARCHF5, leading to NLRP3-NEK7 complex formation and NLRP3 oligomerization. The disulfide bond in the pyrin domain might play a role in reactive oxygen species-mediated activation. In terms of processing, palmitoylation by ZDHHC12 promotes NLRP3 degradation by the chaperone-mediated autophagy pathway (CMA) and therefore limits NLRP3 inflammasome activation. Interaction with ZDHHC12, and hence NLRP3 palmitoylation, is enhanced by ABHD8. Following palmitoylation, HSPA8/HSC70 recognizes and binds the KFERQ-like motifs on NLRP3 and promotes NLRP3 recruitment to lysosomes, where it is degraded via the chaperone-mediated autophagy pathway in a LAMP2-dependent process. Palmitoylation at Cys-834 and Cys-835 by ZDHHC5 enhances its binding to NEK7 leading to inflammasome assembly and activation. Palmitoylation at Cys-126 and Cys-955 by ZDHHC1 facilitates phosphorylation at Ser-261 by LATS1 and LATS2, promoting its relocalization to the microtubule organizing center (MTOC), where NLRP3 is activated by NEK7, leading to inflammasome assembly and activation. Depalmitoylated by ABHD17A. Post-translationally, degraded via selective autophagy following interaction with Irgm1. Irgm1 promotes NLRP3 recruitment to autophagosome membranes, promoting its SQSTM1/p62-dependent autophagy-dependent degradation. As to expression, expressed with high levels in peripheral blood leukocytes, including Th2 lymphocytes and macrophages. Expressed at low levels in resting osteoblasts (at protein level).

It is found in the cytoplasm. Its subcellular location is the cytosol. The protein resides in the inflammasome. It localises to the cytoskeleton. The protein localises to the microtubule organizing center. It is found in the golgi apparatus membrane. Its subcellular location is the endoplasmic reticulum. The protein resides in the mitochondrion. It localises to the secreted. The protein localises to the nucleus. It catalyses the reaction ATP + H2O = ADP + phosphate + H(+). With respect to regulation, under resting conditions, NLRP3 binds ADP and is autoinhibited. Inactive NLRP3 forms homodecameric double-ring cages that hide pyrin domains within NACHT-LRR rings to avoid premature activation. NLRP3 activation stimuli include extracellular ATP, nigericin, reactive oxygen species, crystals of monosodium urate or cholesterol, amyloid-beta fibers, environmental or industrial particles and nanoparticles, such as asbestos, silica, aluminum salts, cytosolic dsRNA, etc. Almost all stimuli trigger intracellular K(+) efflux. These stimuli lead to membrane perturbations that induce activation of NLRP3. Upon activation, NLRP3 is transported to microtubule organizing center (MTOC), where it is unlocked by NEK7, leading to its relocalization to dispersed trans-Golgi network (dTGN) vesicle membranes and recruitment of PYCARD/ASC for the formation of an active inflammasome complex. NEK7-activated NLRP3 forms a disk-shaped inflammasome. NLRP3 and PYCARD/ASC interact via their respective pyrin domains; interaction initiates speck formation (nucleation) which greatly enhances further addition of soluble PYCARD/ASC molecules to the speck in a prion-like polymerization process. Clustered PYCARD/ASC nucleates the formation of CASP1 filaments through the interaction of their respective CARD domains, acting as a platform for CASP1 polymerization and activation. Active CASP1 then processes IL1B and IL18 precursors, leading to the release of mature cytokines in the extracellular milieu and inflammatory response. NLRP3 inflammasome assembly is inhibited by IRGM, which impedes NLRP3 oligomerization. NLRP3 inflammasome is inhibited by cyclic AMP (cAMP), which directly binds NLRP3; inhibition is relieved by calcium-sensing receptor CASR, which inhibits production of cAMP. Specifically inhibited by sulfonylurea MCC950 (also named CP-456,773, CRID3), a potent and specific small-molecule inhibitor of the NLRP3 inflammasome that acts by preventing ATP hydrolysis. Its function is as follows. Sensor component of the NLRP3 inflammasome, which mediates inflammasome activation in response to defects in membrane integrity, leading to secretion of inflammatory cytokines IL1B and IL18 and pyroptosis. In response to pathogens and other damage-associated signals that affect the integrity of membranes, initiates the formation of the inflammasome polymeric complex composed of NLRP3, CASP1 and PYCARD/ASC. Recruitment of pro-caspase-1 (proCASP1) to the NLRP3 inflammasome promotes caspase-1 (CASP1) activation, which subsequently cleaves and activates inflammatory cytokines IL1B and IL18 and gasdermin-D (GSDMD), promoting cytokine secretion and pyroptosis. Activation of NLRP3 inflammasome is also required for HMGB1 secretion; stimulating inflammatory responses. Under resting conditions, ADP-bound NLRP3 is autoinhibited. NLRP3 activation stimuli include extracellular ATP, nigericin, reactive oxygen species, crystals of monosodium urate or cholesterol, amyloid-beta fibers, environmental or industrial particles and nanoparticles, such as asbestos, silica, aluminum salts, cytosolic dsRNA, etc. Almost all stimuli trigger intracellular K(+) efflux. These stimuli lead to membrane perturbation and activation of NLRP3. Upon activation, NLRP3 is transported to microtubule organizing center (MTOC), where it is unlocked by NEK7, leading to its relocalization to dispersed trans-Golgi network (dTGN) vesicle membranes and formation of an active inflammasome complex. Associates with dTGN vesicle membranes by binding to phosphatidylinositol 4-phosphate (PtdIns4P). Shows ATPase activity. Independently of inflammasome activation, regulates the differentiation of T helper 2 (Th2) cells and has a role in Th2 cell-dependent asthma and tumor growth. During Th2 differentiation, required for optimal IRF4 binding to IL4 promoter and for IRF4-dependent IL4 transcription. Binds to the consensus DNA sequence 5'-GRRGGNRGAG-3'. May also participate in the transcription of IL5, IL13, GATA3, CCR3, CCR4 and MAF. The polypeptide is NACHT, LRR and PYD domains-containing protein 3 (Mus musculus (Mouse)).